We begin with the raw amino-acid sequence, 415 residues long: Multidrug resistance protein MdtA (415 aa).

Positions Met1–Ala21 are cleaved as a signal peptide. The disordered stretch occupies residues Ala387–Ser415. Basic and acidic residues predominate over residues Ala394 to Pro403.

The protein belongs to the membrane fusion protein (MFP) (TC 8.A.1) family. In terms of assembly, part of a tripartite efflux system composed of MdtA, MdtB and MdtC.

The protein resides in the cell inner membrane. The sequence is that of Multidrug resistance protein MdtA from Cronobacter turicensis (strain DSM 18703 / CCUG 55852 / LMG 23827 / z3032).